We begin with the raw amino-acid sequence, 250 residues long: Hydroxyethylthiazole kinase (250 aa).

Position 39 (M39) interacts with substrate. The ATP site is built by R114 and T159. G186 contributes to the substrate binding site.

Belongs to the Thz kinase family. The cofactor is Mg(2+).

It catalyses the reaction 5-(2-hydroxyethyl)-4-methylthiazole + ATP = 4-methyl-5-(2-phosphooxyethyl)-thiazole + ADP + H(+). Its pathway is cofactor biosynthesis; thiamine diphosphate biosynthesis; 4-methyl-5-(2-phosphoethyl)-thiazole from 5-(2-hydroxyethyl)-4-methylthiazole: step 1/1. In terms of biological role, catalyzes the phosphorylation of the hydroxyl group of 4-methyl-5-beta-hydroxyethylthiazole (THZ). This Lactococcus lactis subsp. lactis (strain IL1403) (Streptococcus lactis) protein is Hydroxyethylthiazole kinase.